Consider the following 322-residue polypeptide: MKTTFLDFEQPIAELEAKIEELRFVQDDSALDISEEIRRLQKKSQALTKDIYAKLNAWQVSQVARHPQRPYTLDYIQGLFTDFVELHGDRAYADDAAIVGGMARFNGEPVMVIGHQKGRDTKEKIFRNFGMPRPEGYRKALRLMRLAEKFRLPILTFIDTPGAYPGIGAEERGQSEAIARNLYVMAELQTPIVCTIVGEGGSGGALAIGVGDRTLILQYSTYSVISPEGCASILWKSADKASVAAETLGITADRLKANGLVDRIIEEPLGGAQRDWDAMFQSMRRALTDTLAELRKQPTEAMLGARYQRLRAYGSFKEAPAR.

The CoA carboxyltransferase C-terminal domain occupies 39-293; sequence RLQKKSQALT…RRALTDTLAE (255 aa).

It belongs to the AccA family. In terms of assembly, acetyl-CoA carboxylase is a heterohexamer composed of biotin carboxyl carrier protein (AccB), biotin carboxylase (AccC) and two subunits each of ACCase subunit alpha (AccA) and ACCase subunit beta (AccD).

The protein localises to the cytoplasm. The catalysed reaction is N(6)-carboxybiotinyl-L-lysyl-[protein] + acetyl-CoA = N(6)-biotinyl-L-lysyl-[protein] + malonyl-CoA. Its pathway is lipid metabolism; malonyl-CoA biosynthesis; malonyl-CoA from acetyl-CoA: step 1/1. Component of the acetyl coenzyme A carboxylase (ACC) complex. First, biotin carboxylase catalyzes the carboxylation of biotin on its carrier protein (BCCP) and then the CO(2) group is transferred by the carboxyltransferase to acetyl-CoA to form malonyl-CoA. The chain is Acetyl-coenzyme A carboxylase carboxyl transferase subunit alpha from Thiobacillus denitrificans (strain ATCC 25259 / T1).